The following is a 357-amino-acid chain: Probable cinnamyl alcohol dehydrogenase 1 (357 aa).

A Zn(2+)-binding site is contributed by C47. T49 serves as a coordination point for NADP(+). The Zn(2+) site is built by H69, E70, C100, C103, C106, C114, and C163. NADP(+) is bound by residues T167, 188–193 (GLGGVG), 211–216 (SSSNKK), T251, G275, and 298–300 (SFI).

It belongs to the zinc-containing alcohol dehydrogenase family. In terms of assembly, homodimer. The cofactor is Zn(2+). Post-translationally, the N-terminus is blocked.

It catalyses the reaction (E)-cinnamyl alcohol + NADP(+) = (E)-cinnamaldehyde + NADPH + H(+). The catalysed reaction is (E)-coniferol + NADP(+) = (E)-coniferaldehyde + NADPH + H(+). The enzyme catalyses (E)-sinapyl alcohol + NADP(+) = (E)-sinapaldehyde + NADPH + H(+). It carries out the reaction (E)-4-coumaroyl alcohol + NADP(+) = (E)-4-coumaraldehyde + NADPH + H(+). It catalyses the reaction (E)-caffeyl alcohol + NADP(+) = (E)-caffeyl aldehyde + NADPH + H(+). Its pathway is aromatic compound metabolism; phenylpropanoid biosynthesis. In terms of biological role, involved in lignin biosynthesis. Catalyzes the final step specific for the production of lignin monomers. Catalyzes the NADPH-dependent reduction of coniferaldehyde, 5-hydroxyconiferaldehyde, sinapaldehyde, 4-coumaraldehyde and caffeyl aldehyde to their respective alcohols. The polypeptide is Probable cinnamyl alcohol dehydrogenase 1 (Nicotiana tabacum (Common tobacco)).